A 336-amino-acid chain; its full sequence is Protein-glutamate methylesterase/protein-glutamine glutaminase 1 (336 aa).

The Response regulatory domain maps to 2–119; that stretch reads KIAIVNDMPM…GNAQEAAAPL (118 aa). The residue at position 53 (Asp-53) is a 4-aspartylphosphate. Residues 143 to 336 enclose the CheB-type methylesterase domain; sequence PLRSGAPRQS…APRLLEIFAK (194 aa). Active-site residues include Ser-159, His-186, and Asp-279.

Belongs to the CheB family. Phosphorylated by CheA. Phosphorylation of the N-terminal regulatory domain activates the methylesterase activity.

The protein localises to the cytoplasm. It carries out the reaction [protein]-L-glutamate 5-O-methyl ester + H2O = L-glutamyl-[protein] + methanol + H(+). The enzyme catalyses L-glutaminyl-[protein] + H2O = L-glutamyl-[protein] + NH4(+). Involved in chemotaxis. Part of a chemotaxis signal transduction system that modulates chemotaxis in response to various stimuli. Catalyzes the demethylation of specific methylglutamate residues introduced into the chemoreceptors (methyl-accepting chemotaxis proteins or MCP) by CheR. Also mediates the irreversible deamidation of specific glutamine residues to glutamic acid. This Pseudomonas fluorescens (strain ATCC BAA-477 / NRRL B-23932 / Pf-5) protein is Protein-glutamate methylesterase/protein-glutamine glutaminase 1.